A 122-amino-acid polypeptide reads, in one-letter code: Small ribosomal subunit protein uS13 (122 aa).

Residues 98-122 (VRGQRTHTNARTRKGPAKAIAGKKK) form a disordered region.

The protein belongs to the universal ribosomal protein uS13 family. In terms of assembly, part of the 30S ribosomal subunit. Forms a loose heterodimer with protein S19. Forms two bridges to the 50S subunit in the 70S ribosome.

Functionally, located at the top of the head of the 30S subunit, it contacts several helices of the 16S rRNA. In the 70S ribosome it contacts the 23S rRNA (bridge B1a) and protein L5 of the 50S subunit (bridge B1b), connecting the 2 subunits; these bridges are implicated in subunit movement. Contacts the tRNAs in the A and P-sites. The sequence is that of Small ribosomal subunit protein uS13 from Ruegeria sp. (strain TM1040) (Silicibacter sp.).